A 1342-amino-acid polypeptide reads, in one-letter code: DNA-directed RNA polymerase subunit beta (1342 aa).

This sequence belongs to the RNA polymerase beta chain family. As to quaternary structure, the RNAP catalytic core consists of 2 alpha, 1 beta, 1 beta' and 1 omega subunit. When a sigma factor is associated with the core the holoenzyme is formed, which can initiate transcription.

It catalyses the reaction RNA(n) + a ribonucleoside 5'-triphosphate = RNA(n+1) + diphosphate. DNA-dependent RNA polymerase catalyzes the transcription of DNA into RNA using the four ribonucleoside triphosphates as substrates. This is DNA-directed RNA polymerase subunit beta from Wigglesworthia glossinidia brevipalpis.